Consider the following 405-residue polypeptide: Deoxyguanosinetriphosphate triphosphohydrolase-like protein (405 aa).

Residues 75 to 219 (RLTHTIEVAQ…AAVADDIAYN (145 aa)) enclose the HD domain.

Belongs to the dGTPase family. Type 2 subfamily.

This chain is Deoxyguanosinetriphosphate triphosphohydrolase-like protein, found in Allorhizobium ampelinum (strain ATCC BAA-846 / DSM 112012 / S4) (Agrobacterium vitis (strain S4)).